Reading from the N-terminus, the 505-residue chain is Protein DETOXIFICATION 50 (505 aa).

Transmembrane regions (helical) follow at residues 46-66 (LVLT…FLGG), 78-98 (AAAF…MGVE), 121-141 (IILL…MEKI), 155-175 (AHIF…LHPL), 194-214 (IASF…GLGI), 219-239 (LSGV…ICFF), 275-295 (ISVC…GFLL), 305-325 (GILI…SLGV), 344-364 (AAIV…AFTV), 380-400 (IMKL…GNCP), 424-444 (AFYA…GFGF), and 446-466 (GLWL…MAAT).

Belongs to the multi antimicrobial extrusion (MATE) (TC 2.A.66.1) family. In terms of tissue distribution, preferentially expressed in rosette leaves. Detected mainly in the vascular tissues and guard cells. Mostly detected at reproductive stages in young anthers, in mature pollens and during pollen germination on the pistil. Also expressed in developing seeds.

The protein localises to the cell membrane. Its subcellular location is the late endosome membrane. Functionally, functions as a multidrug and toxin extrusion transporter in the export of abscisic acid (ABA) in guard cells. Plays a role in ABA-mediated growth inhibition and responses to drought conditions. May act as a negative regulator of hypocotyl cell elongation in the light. This Arabidopsis thaliana (Mouse-ear cress) protein is Protein DETOXIFICATION 50.